A 471-amino-acid polypeptide reads, in one-letter code: MSRLGALGGSRAGLGLLLGTAAGLGFLCVLYSQRWKRTQRHGRSQSLPNSLDYAQTSERGRQVTQLRAIPGEAGDAAMLSSLPQEGQEKVLDRLDFVLTSLMALRREVEELQRSLQGLAGEIVGEVRSHMEENQRVARRRRFPFARERSDSTGSSSVYFTASSGATLTDAESEGGYTTANAESDYERDSDKESEDAEDEVSCETVKMGRKDSLDLDMEVASSPASAALEDDDSSGLEDVQLLLQQADELHQGSEQNKQEGFQLLLNNKLAYGSRQDFLWRLARAYSDMTELTEEESEKKSYALNGKEEAEAALKKGDESAASHLWYAVLCGQLAEHEGISKRIQSGFSFKEHVDKAIELQPEDPRGHFLLGRWCYQVSHLSWLEKKTATALFESPLSATVQDALQSFLKAEELQPGFSKAGRVYISKCYRELGKNSEARKWLNLAQELPNITNEDSAFQKDLEELEVILGK.

Over 1–12 (MSRLGALGGSRA) the chain is Mitochondrial intermembrane. A helical transmembrane segment spans residues 13 to 35 (GLGLLLGTAAGLGFLCVLYSQRW). The Cytoplasmic segment spans residues 36-471 (KRTQRHGRSQ…LEELEVILGK (436 aa)). Serine 44, serine 46, serine 50, and serine 57 each carry phosphoserine. Residues 91-125 (LDRLDFVLTSLMALRREVEELQRSLQGLAGEIVGE) adopt a coiled-coil conformation. The FFAT motif lies at 157–163 (VYFTASS). Threonine 160 bears the Phosphothreonine mark. The interval 168–203 (TDAESEGGYTTANAESDYERDSDKESEDAEDEVSCE) is disordered. 4 positions are modified to phosphoserine: serine 183, serine 193, serine 212, and serine 233. Residues 191-201 (KESEDAEDEVS) are compositionally biased toward acidic residues.

Belongs to the RMDN family. In terms of assembly, interacts with PTPN2. Interacts with microtubules. Interacts with VAPB. Interacts (via FFAT motif) with MOSPD2 (via MSP domain). Interacts (via phosphorylated FFAT motif) with MOSPD2, VAPA and VAPB. In terms of processing, phosphorylation at Thr-160 of the FFAT motif activates interaction with MOSPD2, VAPA and VAPB.

It localises to the mitochondrion outer membrane. The protein resides in the cytoplasm. Its subcellular location is the nucleus. The protein localises to the cytoskeleton. It is found in the spindle. It localises to the spindle pole. Functionally, involved in cellular calcium homeostasis regulation. May participate in differentiation and apoptosis of keratinocytes. Overexpression induces apoptosis. This Rattus norvegicus (Rat) protein is Regulator of microtubule dynamics protein 3.